The following is a 25-amino-acid chain: Repetitive proline-rich cell wall protein (25 aa).

The interval 1–25 is disordered; the sequence is NYDKPPVEKPPVYKPPVEKPPVYKP. 4 repeat units span residues 5–9, 10–14, 15–19, and 20–24. The interval 5 to 24 is 4 X 5 AA tandem repeats of P-P-V-[EY]-K; that stretch reads PPVEKPPVYKPPVEKPPVYK. 4-hydroxyproline occurs at positions 6, 11, 16, and 21. Residues 8-25 are compositionally biased toward pro residues; sequence EKPPVYKPPVEKPPVYKP.

Belongs to the plant proline-rich protein superfamily. ENOD12 family.

The protein localises to the secreted. Its subcellular location is the cell wall. This chain is Repetitive proline-rich cell wall protein, found in Phaseolus vulgaris (Kidney bean).